Consider the following 358-residue polypeptide: Uroporphyrinogen decarboxylase (358 aa).

Substrate-binding positions include 29 to 33 (RQAGR), phenylalanine 48, aspartate 79, tyrosine 155, serine 210, and histidine 330.

It belongs to the uroporphyrinogen decarboxylase family. As to quaternary structure, homodimer.

It localises to the cytoplasm. It carries out the reaction uroporphyrinogen III + 4 H(+) = coproporphyrinogen III + 4 CO2. It functions in the pathway porphyrin-containing compound metabolism; protoporphyrin-IX biosynthesis; coproporphyrinogen-III from 5-aminolevulinate: step 4/4. Its function is as follows. Catalyzes the decarboxylation of four acetate groups of uroporphyrinogen-III to yield coproporphyrinogen-III. In Bordetella pertussis (strain Tohama I / ATCC BAA-589 / NCTC 13251), this protein is Uroporphyrinogen decarboxylase.